A 279-amino-acid polypeptide reads, in one-letter code: Succinate dehydrogenase [ubiquinone] iron-sulfur subunit 1, mitochondrial (279 aa).

Residues 1-28 constitute a mitochondrion transit peptide; that stretch reads MASGLIGRLVGTKPSKLATAARLIPARW. A 2Fe-2S ferredoxin-type domain is found at 52-141; it reads FQIYRWNPDN…ETTITPLPHM (90 aa). [2Fe-2S] cluster is bound by residues C102, C107, and C122. The 31-residue stretch at 184–214 folds into the 4Fe-4S ferredoxin-type domain; it reads DRAKLDGMYECILCACCSTSCPSYWWNPESY. Residues C194, C197, and C200 each contribute to the [4Fe-4S] cluster site. C204 contributes to the [3Fe-4S] cluster binding site. Residue W209 coordinates a ubiquinone. [3Fe-4S] cluster-binding residues include C251 and C257. C261 is a binding site for [4Fe-4S] cluster.

It belongs to the succinate dehydrogenase/fumarate reductase iron-sulfur protein family. In terms of assembly, component of complex II composed of eight subunits in plants: four classical SDH subunits SDH1, SDH2, SDH3 and SDH4 (a flavoprotein (FP), an iron-sulfur protein (IP), and a cytochrome b composed of a large and a small subunit.), as well as four subunits unknown in mitochondria from bacteria and heterotrophic eukaryotes. Requires [2Fe-2S] cluster as cofactor. [3Fe-4S] cluster is required as a cofactor. The cofactor is [4Fe-4S] cluster. As to expression, ubiquitous. Preferentially expressed in flowers and inflorescences.

The protein localises to the mitochondrion inner membrane. It catalyses the reaction a quinone + succinate = fumarate + a quinol. It functions in the pathway carbohydrate metabolism; tricarboxylic acid cycle; fumarate from succinate (eukaryal route): step 1/1. In terms of biological role, iron-sulfur protein (IP) subunit of succinate dehydrogenase (SDH) that is involved in complex II of the mitochondrial electron transport chain and is responsible for transferring electrons from succinate to ubiquinone (coenzyme Q). The protein is Succinate dehydrogenase [ubiquinone] iron-sulfur subunit 1, mitochondrial (SDH2-1) of Arabidopsis thaliana (Mouse-ear cress).